Consider the following 290-residue polypeptide: UDP-N-acetylenolpyruvoylglucosamine reductase (290 aa).

Positions 20–187 (GVGGESEMWF…SRVRLKLRPS (168 aa)) constitute an FAD-binding PCMH-type domain. The active site involves Arg-167.

This sequence belongs to the MurB family. The cofactor is FAD.

The protein resides in the cytoplasm. It carries out the reaction UDP-N-acetyl-alpha-D-muramate + NADP(+) = UDP-N-acetyl-3-O-(1-carboxyvinyl)-alpha-D-glucosamine + NADPH + H(+). The protein operates within cell wall biogenesis; peptidoglycan biosynthesis. Functionally, cell wall formation. This Deinococcus radiodurans (strain ATCC 13939 / DSM 20539 / JCM 16871 / CCUG 27074 / LMG 4051 / NBRC 15346 / NCIMB 9279 / VKM B-1422 / R1) protein is UDP-N-acetylenolpyruvoylglucosamine reductase.